Consider the following 101-residue polypeptide: Large ribosomal subunit protein uL24 (101 aa).

It belongs to the universal ribosomal protein uL24 family. In terms of assembly, part of the 50S ribosomal subunit.

One of two assembly initiator proteins, it binds directly to the 5'-end of the 23S rRNA, where it nucleates assembly of the 50S subunit. Its function is as follows. One of the proteins that surrounds the polypeptide exit tunnel on the outside of the subunit. This is Large ribosomal subunit protein uL24 from Streptococcus mutans serotype c (strain ATCC 700610 / UA159).